A 119-amino-acid chain; its full sequence is Basic phospholipase A2 taipoxin alpha chain (119 aa).

Disulfide bonds link cysteine 11-cysteine 72, cysteine 27-cysteine 118, cysteine 29-cysteine 45, cysteine 44-cysteine 99, cysteine 51-cysteine 92, cysteine 61-cysteine 85, and cysteine 79-cysteine 90. The Ca(2+) site is built by tyrosine 28, glycine 30, and glycine 32. Histidine 48 is an active-site residue. A Ca(2+)-binding site is contributed by aspartate 49. Aspartate 93 is an active-site residue.

The protein belongs to the phospholipase A2 family. Group I subfamily. D49 sub-subfamily. In terms of assembly, heterotrimer of alpha, beta, and gamma chains; non-covalently linked. The cofactor is Ca(2+). In terms of tissue distribution, expressed by the venom gland.

The protein localises to the secreted. It catalyses the reaction a 1,2-diacyl-sn-glycero-3-phosphocholine + H2O = a 1-acyl-sn-glycero-3-phosphocholine + a fatty acid + H(+). Heterotrimer: Snake venom phospholipase A2 (PLA2) heterotrimer that acts as a potent presynaptic neurotoxin by blocking synaptic transmission and synaptic vesicle recycling. May act by binding in a calcium-dependent fashion to neurotonal pentraxin-1 (NPTX1) and neurotonal pentraxin-2 (NPTX2), but not to neuronal pentraxin receptor (NPTXR). Also binds to taipoxin-associated calcium binding protein 49 (RCN2), a protein localized in the lumen of endoplasmic reticulum. In terms of biological role, monomer (alpha chain): Snake venom phospholipase A2 (PLA2) alpha chain that possesses the same high enzymatic activity as the heterotrimer. PLA2 catalyzes the calcium-dependent hydrolysis of the 2-acyl groups in 3-sn-phosphoglycerides. This is Basic phospholipase A2 taipoxin alpha chain from Oxyuranus scutellatus scutellatus (Australian taipan).